The following is a 312-amino-acid chain: Probable phytanoyl-CoA dioxygenase (312 aa).

2-oxoglutarate-binding positions include K84, M124, 142 to 144 (HQD), and W160. Fe cation is bound by residues H142 and D144. Position 231 (H231) interacts with Fe cation. Positions 233 and 242 each coordinate 2-oxoglutarate.

This sequence belongs to the PhyH family. Requires Fe cation as cofactor. L-ascorbate serves as cofactor.

The enzyme catalyses phytanoyl-CoA + 2-oxoglutarate + O2 = 2-hydroxyphytanoyl-CoA + succinate + CO2. It functions in the pathway lipid metabolism; fatty acid metabolism. Converts phytanoyl-CoA to 2-hydroxyphytanoyl-CoA. This is Probable phytanoyl-CoA dioxygenase from Caenorhabditis elegans.